A 361-amino-acid chain; its full sequence is Phosphoserine aminotransferase (361 aa).

Residue arginine 43 participates in L-glutamate binding. Pyridoxal 5'-phosphate-binding positions include 77–78 (AS), tryptophan 103, threonine 153, aspartate 173, and glutamine 196. Lysine 197 is subject to N6-(pyridoxal phosphate)lysine. 238-239 (NT) lines the pyridoxal 5'-phosphate pocket.

The protein belongs to the class-V pyridoxal-phosphate-dependent aminotransferase family. SerC subfamily. As to quaternary structure, homodimer. Requires pyridoxal 5'-phosphate as cofactor.

Its subcellular location is the cytoplasm. It carries out the reaction O-phospho-L-serine + 2-oxoglutarate = 3-phosphooxypyruvate + L-glutamate. It catalyses the reaction 4-(phosphooxy)-L-threonine + 2-oxoglutarate = (R)-3-hydroxy-2-oxo-4-phosphooxybutanoate + L-glutamate. The protein operates within amino-acid biosynthesis; L-serine biosynthesis; L-serine from 3-phospho-D-glycerate: step 2/3. It functions in the pathway cofactor biosynthesis; pyridoxine 5'-phosphate biosynthesis; pyridoxine 5'-phosphate from D-erythrose 4-phosphate: step 3/5. In terms of biological role, catalyzes the reversible conversion of 3-phosphohydroxypyruvate to phosphoserine and of 3-hydroxy-2-oxo-4-phosphonooxybutanoate to phosphohydroxythreonine. This Pseudomonas syringae pv. syringae (strain B728a) protein is Phosphoserine aminotransferase.